The primary structure comprises 243 residues: 1-(5-phosphoribosyl)-5-[(5-phosphoribosylamino)methylideneamino] imidazole-4-carboxamide isomerase (243 aa).

Asp8 functions as the Proton acceptor in the catalytic mechanism. The active-site Proton donor is the Asp130.

Belongs to the HisA/HisF family.

It is found in the cytoplasm. It carries out the reaction 1-(5-phospho-beta-D-ribosyl)-5-[(5-phospho-beta-D-ribosylamino)methylideneamino]imidazole-4-carboxamide = 5-[(5-phospho-1-deoxy-D-ribulos-1-ylimino)methylamino]-1-(5-phospho-beta-D-ribosyl)imidazole-4-carboxamide. It functions in the pathway amino-acid biosynthesis; L-histidine biosynthesis; L-histidine from 5-phospho-alpha-D-ribose 1-diphosphate: step 4/9. In Cellvibrio japonicus (strain Ueda107) (Pseudomonas fluorescens subsp. cellulosa), this protein is 1-(5-phosphoribosyl)-5-[(5-phosphoribosylamino)methylideneamino] imidazole-4-carboxamide isomerase.